Reading from the N-terminus, the 151-residue chain is Large ribosomal subunit protein uL13 (151 aa).

Belongs to the universal ribosomal protein uL13 family. Part of the 50S ribosomal subunit.

This protein is one of the early assembly proteins of the 50S ribosomal subunit, although it is not seen to bind rRNA by itself. It is important during the early stages of 50S assembly. The polypeptide is Large ribosomal subunit protein uL13 (Rippkaea orientalis (strain PCC 8801 / RF-1) (Cyanothece sp. (strain PCC 8801))).